A 200-amino-acid polypeptide reads, in one-letter code: Thymidylate kinase (200 aa).

Residue 10–17 participates in ATP binding; sequence GIDGAGKS.

The protein belongs to the thymidylate kinase family.

It carries out the reaction dTMP + ATP = dTDP + ADP. In terms of biological role, phosphorylation of dTMP to form dTDP in both de novo and salvage pathways of dTTP synthesis. This Cupriavidus metallidurans (strain ATCC 43123 / DSM 2839 / NBRC 102507 / CH34) (Ralstonia metallidurans) protein is Thymidylate kinase.